Consider the following 126-residue polypeptide: MKKTMLTGKLHQARVTHAELNYEGSCAIDQDLLEQAGILEYEQIEIYNIENGARFSTYAITGERGSKMISVNGAAARLAAVGDRVIICTYASLNAAEIVNHKPSLVYLDAQNNIVRTSKDVPVQVA.

Catalysis depends on Ser25, which acts as the Schiff-base intermediate with substrate; via pyruvic acid. Ser25 is modified (pyruvic acid (Ser)). Thr57 is a binding site for substrate. Tyr58 serves as the catalytic Proton donor. 73-75 is a substrate binding site; the sequence is GAA.

Belongs to the PanD family. In terms of assembly, heterooctamer of four alpha and four beta subunits. Pyruvate is required as a cofactor. In terms of processing, is synthesized initially as an inactive proenzyme, which is activated by self-cleavage at a specific serine bond to produce a beta-subunit with a hydroxyl group at its C-terminus and an alpha-subunit with a pyruvoyl group at its N-terminus.

It localises to the cytoplasm. It catalyses the reaction L-aspartate + H(+) = beta-alanine + CO2. It functions in the pathway cofactor biosynthesis; (R)-pantothenate biosynthesis; beta-alanine from L-aspartate: step 1/1. In terms of biological role, catalyzes the pyruvoyl-dependent decarboxylation of aspartate to produce beta-alanine. The polypeptide is Aspartate 1-decarboxylase (Psychromonas ingrahamii (strain DSM 17664 / CCUG 51855 / 37)).